The following is a 199-amino-acid chain: Holliday junction branch migration complex subunit RuvA (199 aa).

A domain I region spans residues 1 to 64; the sequence is MIAKLTGRLD…EDFLRLLGFA (64 aa). The segment at 65 to 143 is domain II; that stretch reads RAEERDWFRL…ALGGISGSGP (79 aa). The interval 144–146 is flexible linker; that stretch reads ALS. A domain III region spans residues 147 to 199; the sequence is AAAGPVGDAIAALTGLGFKPGEASAAVAAANEELGADASLDALVRVALKKAAK.

The protein belongs to the RuvA family. Homotetramer. Forms an RuvA(8)-RuvB(12)-Holliday junction (HJ) complex. HJ DNA is sandwiched between 2 RuvA tetramers; dsDNA enters through RuvA and exits via RuvB. An RuvB hexamer assembles on each DNA strand where it exits the tetramer. Each RuvB hexamer is contacted by two RuvA subunits (via domain III) on 2 adjacent RuvB subunits; this complex drives branch migration. In the full resolvosome a probable DNA-RuvA(4)-RuvB(12)-RuvC(2) complex forms which resolves the HJ.

The protein localises to the cytoplasm. Functionally, the RuvA-RuvB-RuvC complex processes Holliday junction (HJ) DNA during genetic recombination and DNA repair, while the RuvA-RuvB complex plays an important role in the rescue of blocked DNA replication forks via replication fork reversal (RFR). RuvA specifically binds to HJ cruciform DNA, conferring on it an open structure. The RuvB hexamer acts as an ATP-dependent pump, pulling dsDNA into and through the RuvAB complex. HJ branch migration allows RuvC to scan DNA until it finds its consensus sequence, where it cleaves and resolves the cruciform DNA. The chain is Holliday junction branch migration complex subunit RuvA from Sphingopyxis alaskensis (strain DSM 13593 / LMG 18877 / RB2256) (Sphingomonas alaskensis).